We begin with the raw amino-acid sequence, 490 residues long: Histone-lysine N-methyltransferase, H3 lysine-9 specific (490 aa).

The Chromo domain maps to 8–69 (YEVERIVDEK…RKRRLKGSNS (62 aa)). Disordered regions lie at residues 61-133 (KRRL…TALT) and 150-190 (KKLG…KPRN). Positions 102-114 (FSRELNVKKENKK) are enriched in basic and acidic residues. Positions 115–133 (VFSSQTTKRQSRKQSTALT) are enriched in polar residues. Lysine 127 is subject to N6,N6,N6-trimethyllysine; alternate. Position 127 is an N6-methyllysine; alternate (lysine 127). The segment covering 155-168 (TRNEVKEESQKREL) has biased composition (basic and acidic residues). The span at 169–185 (VSNSIKEATSPKTSSIL) shows a compositional bias: polar residues. Residues 258-325 (SGCNCSSLGG…ECPNRVVQRG (68 aa)) enclose the Pre-SET domain. Zn(2+)-binding residues include cysteine 260, cysteine 262, cysteine 268, cysteine 276, cysteine 278, cysteine 307, cysteine 311, cysteine 313, and cysteine 317. Positions 328 to 452 (LPLEIFKTKE…PLEELTFDYA (125 aa)) constitute an SET domain. Residues 338–340 (KGW), tyrosine 381, arginine 406, and 407–410 (FFNH) each bind S-adenosyl-L-methionine. Cysteine 412 contacts Zn(2+). The tract at residues 453-472 (GAKDFSPVQSQKSQQNRISK) is autoregulatory loop. Lysine 455 carries the N6,N6,N6-trimethyllysine; by autocatalysis; alternate modification. Lysine 455 bears the N6,N6-dimethyllysine; by autocatalysis; alternate mark. Lysine 455 bears the N6-methyllysine; by autocatalysis; alternate mark. Lysine 464 is subject to N6-methyllysine. The 17-residue stretch at 473-489 (LRRQCKCGSANCRGWLF) folds into the Post-SET domain. The Zn(2+) site is built by cysteine 477, cysteine 479, and cysteine 484. 477 to 478 (CK) is a binding site for S-adenosyl-L-methionine.

The protein belongs to the class V-like SAM-binding methyltransferase superfamily. Histone-lysine methyltransferase family. Suvar3-9 subfamily. In terms of assembly, component of the Clr4 methyltransferase complex (ClrC) composed of at least clr4, rik1, pcu4, rbx1, raf1 and raf2. The cullin pcu4, rik1, raf1, raf2 and the ring-box protein rbx1 are components of an E3 ubiquitin ligase, whose activity is essential for heterochromatin assembly. Interacts directly with pcu4. Interacts with mlo3. In terms of processing, autocatalytic methylation of specific lysine residues in an internal loop (autoregulatory loop) promote a conformational switch that enhances the H3K9me activity of clr4.

It is found in the nucleus. The protein localises to the cytoplasm. The protein resides in the cytoskeleton. Its subcellular location is the microtubule organizing center. It localises to the spindle pole body. It is found in the chromosome. The catalysed reaction is L-lysyl(9)-[histone H3] + 3 S-adenosyl-L-methionine = N(6),N(6),N(6)-trimethyl-L-lysyl(9)-[histone H3] + 3 S-adenosyl-L-homocysteine + 3 H(+). It catalyses the reaction N(6)-methyl-L-lysyl(9)-[histone H3] + S-adenosyl-L-methionine = N(6),N(6)-dimethyl-L-lysyl(9)-[histone H3] + S-adenosyl-L-homocysteine + H(+). The enzyme catalyses N(6),N(6)-dimethyl-L-lysyl(9)-[histone H3] + S-adenosyl-L-methionine = N(6),N(6),N(6)-trimethyl-L-lysyl(9)-[histone H3] + S-adenosyl-L-homocysteine + H(+). It carries out the reaction L-lysyl-[protein] + S-adenosyl-L-methionine = N(6)-methyl-L-lysyl-[protein] + S-adenosyl-L-homocysteine + H(+). The catalysed reaction is N(6)-methyl-L-lysyl-[protein] + S-adenosyl-L-methionine = N(6),N(6)-dimethyl-L-lysyl-[protein] + S-adenosyl-L-homocysteine + H(+). It catalyses the reaction N(6),N(6)-dimethyl-L-lysyl-[protein] + S-adenosyl-L-methionine = N(6),N(6),N(6)-trimethyl-L-lysyl-[protein] + S-adenosyl-L-homocysteine + H(+). The enzyme catalyses L-lysyl(9)-[histone H3] + S-adenosyl-L-methionine = N(6)-methyl-L-lysyl(9)-[histone H3] + S-adenosyl-L-homocysteine + H(+). An internal loop (autoregulatory loop) inhibits the catalytic activity of the enzyme by blocking the histone H3K9 substrate-binding pocket. Autocatalytic methylation of specific lysine residues in this loop promote a conformational switch that enhances the H3K9me activity of clr4. Functionally, histone methyltransferase which contributes to the establishment of heterochromatin by specifically methylating histone H3 to form H3K9me. Part of the Clr4 methyltransferase complex (ClrC). ClrC preferentially ubiquitylates H3K14 and ClrC-mediated H3 ubiquitination promotes clr4 methyltransferase activity. Clr4 functions as a reader and writer of H3K9 methylation. It sets the H3K9me mark and afterwards this H3K9me mark is recognized by the chromodomains of clr4 and swi6/HP1, which then recruit additional clr4 leading to the methylation of neighboring nucleosomes. H3K9me represents a specific tag for epigenetic transcriptional repression by recruiting swi6/HP1 to methylated histones which leads to transcriptional silencing within centromeric heterochromatin, telomeres, ribosomal DNA repeats, and the silent mating-type region. Clr4 methyltransferase activity promotes the assembly of a tripartite complex composed of ClrC and complexes involved in siRNA generation. Apart from H3K9, also methylates non-histone proteins such as mlo3. Interacts with mlo3 to promote the processing of centromeric and antisense RNAs. The chain is Histone-lysine N-methyltransferase, H3 lysine-9 specific (clr4) from Schizosaccharomyces pombe (strain 972 / ATCC 24843) (Fission yeast).